We begin with the raw amino-acid sequence, 315 residues long: N-acetyl-gamma-glutamyl-phosphate reductase (315 aa).

Residue cysteine 117 is part of the active site.

The protein belongs to the NAGSA dehydrogenase family. Type 2 subfamily.

Its subcellular location is the cytoplasm. It carries out the reaction N-acetyl-L-glutamate 5-semialdehyde + phosphate + NADP(+) = N-acetyl-L-glutamyl 5-phosphate + NADPH + H(+). It participates in amino-acid biosynthesis; L-arginine biosynthesis; N(2)-acetyl-L-ornithine from L-glutamate: step 3/4. Its function is as follows. Catalyzes the NADPH-dependent reduction of N-acetyl-5-glutamyl phosphate to yield N-acetyl-L-glutamate 5-semialdehyde. The sequence is that of N-acetyl-gamma-glutamyl-phosphate reductase from Burkholderia lata (strain ATCC 17760 / DSM 23089 / LMG 22485 / NCIMB 9086 / R18194 / 383).